Here is a 193-residue protein sequence, read N- to C-terminus: Imidazoleglycerol-phosphate dehydratase (193 aa).

Belongs to the imidazoleglycerol-phosphate dehydratase family.

The protein localises to the cytoplasm. It carries out the reaction D-erythro-1-(imidazol-4-yl)glycerol 3-phosphate = 3-(imidazol-4-yl)-2-oxopropyl phosphate + H2O. It participates in amino-acid biosynthesis; L-histidine biosynthesis; L-histidine from 5-phospho-alpha-D-ribose 1-diphosphate: step 6/9. This Saccharolobus islandicus (strain Y.N.15.51 / Yellowstone #2) (Sulfolobus islandicus) protein is Imidazoleglycerol-phosphate dehydratase.